A 497-amino-acid chain; its full sequence is Protein FAM114A2 (497 aa).

A disordered region spans residues 1–54 (MSDKDPPESPVVTGVASTLKDENCEPVEKPEDKSQPVVSTRKRPETKPSSDLEA). Residues 19 to 34 (LKDENCEPVEKPEDKS) show a composition bias toward basic and acidic residues. Phosphoserine is present on residues Ser84 and Ser205. The disordered stretch occupies residues 344–364 (VAEKEEGEKESEAGNTEEAQK).

It belongs to the FAM114 family.

In Mus musculus (Mouse), this protein is Protein FAM114A2 (Fam114a2).